Here is a 451-residue protein sequence, read N- to C-terminus: MTLRMLFAFALLAAAPAQAQQTEPQPAEEGGLSGTVSDDSEWQDLGIAIPAFATNADVPTPTSAGSTSALGQALAQVISANLRNNGLFKPVGPESLPRPGFEQVQAPDFAVWSARSAEMLVQGYVRANGDGQLTVGCYLYDVALKQQLEKAGWTVAPADWRRAAHKCADMIYARLSGESPFFDSRVAYIAESGPKDRRMKRLAIMDSDGANHRYLTSGQATALTPRFSPDYKSILYLSYLNGRPRIYVYDLAANTQRLVTETPGPTFAPRWSPDGKWILYSMATAGNTDIYKVPASGGASQRLTDTPGIDVGGSFSPDGSRIVFESDRSGSQQIYVMNADGSDHRRISFFGGRAATPEWSPRGDQIAFTHIVGNLRIAVVSPGGGDLRYLTDSWQDEAPTWSPNGRIIQFFRTEKGSGKASVWQVDLTGRNERRLSTPGDASDPAWGPLLP.

The N-terminal stretch at Met-1–Ala-19 is a signal peptide. The segment covering Gln-18–Glu-29 has biased composition (low complexity). 2 disordered regions span residues Gln-18–Ser-37 and Asn-431–Pro-451.

This sequence belongs to the TolB family. The Tol-Pal system is composed of five core proteins: the inner membrane proteins TolA, TolQ and TolR, the periplasmic protein TolB and the outer membrane protein Pal. They form a network linking the inner and outer membranes and the peptidoglycan layer.

The protein localises to the periplasm. In terms of biological role, part of the Tol-Pal system, which plays a role in outer membrane invagination during cell division and is important for maintaining outer membrane integrity. This is Tol-Pal system protein TolB 1 from Novosphingobium aromaticivorans (strain ATCC 700278 / DSM 12444 / CCUG 56034 / CIP 105152 / NBRC 16084 / F199).